A 283-amino-acid chain; its full sequence is NADPH-dependent 7-cyano-7-deazaguanine reductase (283 aa).

Residue 89–91 participates in substrate binding; that stretch reads IES. 91-92 contributes to the NADPH binding site; the sequence is SK. Cys-190 acts as the Thioimide intermediate in catalysis. The active-site Proton donor is Asp-197. 229-230 contributes to the substrate binding site; that stretch reads HE. 258-259 provides a ligand contact to NADPH; the sequence is RG.

This sequence belongs to the GTP cyclohydrolase I family. QueF type 2 subfamily. As to quaternary structure, homodimer.

Its subcellular location is the cytoplasm. The enzyme catalyses 7-aminomethyl-7-carbaguanine + 2 NADP(+) = 7-cyano-7-deazaguanine + 2 NADPH + 3 H(+). Its pathway is tRNA modification; tRNA-queuosine biosynthesis. Functionally, catalyzes the NADPH-dependent reduction of 7-cyano-7-deazaguanine (preQ0) to 7-aminomethyl-7-deazaguanine (preQ1). The polypeptide is NADPH-dependent 7-cyano-7-deazaguanine reductase (Aromatoleum aromaticum (strain DSM 19018 / LMG 30748 / EbN1) (Azoarcus sp. (strain EbN1))).